Consider the following 505-residue polypeptide: ATP synthase subunit alpha (505 aa).

ATP is bound at residue 170–177 (GDRQTGKS).

This sequence belongs to the ATPase alpha/beta chains family. F-type ATPases have 2 components, CF(1) - the catalytic core - and CF(0) - the membrane proton channel. CF(1) has five subunits: alpha(3), beta(3), gamma(1), delta(1), epsilon(1). CF(0) has four main subunits: a(1), b(1), b'(1) and c(9-12).

The protein resides in the cellular thylakoid membrane. It catalyses the reaction ATP + H2O + 4 H(+)(in) = ADP + phosphate + 5 H(+)(out). Functionally, produces ATP from ADP in the presence of a proton gradient across the membrane. The alpha chain is a regulatory subunit. This chain is ATP synthase subunit alpha, found in Prochlorococcus marinus (strain MIT 9215).